Here is a 314-residue protein sequence, read N- to C-terminus: 3'-5' exoribonuclease YhaM (314 aa).

The OB DNA-binding region spans 22–90 (SSTKGIASNG…QLKLRNIRPV (69 aa)). The region spanning 163-279 (HVVSMLNLAK…LHYIDNLDAK (117 aa)) is the HD domain.

It belongs to the YhaM family. The cofactor is Mn(2+). Co(2+) serves as cofactor.

Shows a 3'-5' exoribonuclease activity as well as single-stranded DNA 3'-5'exonuclease activity. Plays a role in the secondary pathway of 23S rRNA 3' end maturation. The chain is 3'-5' exoribonuclease YhaM from Bacillus subtilis (strain 168).